The sequence spans 562 residues: Glucose-6-phosphate isomerase (562 aa).

Residue Glu370 is the Proton donor of the active site. Residues His401 and Lys526 contribute to the active site.

The protein belongs to the GPI family.

It is found in the cytoplasm. It catalyses the reaction alpha-D-glucose 6-phosphate = beta-D-fructose 6-phosphate. The protein operates within carbohydrate biosynthesis; gluconeogenesis. It participates in carbohydrate degradation; glycolysis; D-glyceraldehyde 3-phosphate and glycerone phosphate from D-glucose: step 2/4. Its function is as follows. Catalyzes the reversible isomerization of glucose-6-phosphate to fructose-6-phosphate. In Deinococcus geothermalis (strain DSM 11300 / CIP 105573 / AG-3a), this protein is Glucose-6-phosphate isomerase.